The chain runs to 128 residues: Large ribosomal subunit protein bL19 (128 aa).

The protein belongs to the bacterial ribosomal protein bL19 family.

This protein is located at the 30S-50S ribosomal subunit interface and may play a role in the structure and function of the aminoacyl-tRNA binding site. This is Large ribosomal subunit protein bL19 from Aromatoleum aromaticum (strain DSM 19018 / LMG 30748 / EbN1) (Azoarcus sp. (strain EbN1)).